Consider the following 108-residue polypeptide: MAKSRILKGDVVKVIAGSHKGQIGPITSITKDKQWVSVQGITVKKHVKPTNEDSEGGIKDIPAKLHISNVALQDPKNKDQVTKVGFEIIDGKKVRIARKSKTQIKTAK.

The protein belongs to the universal ribosomal protein uL24 family. Part of the 50S ribosomal subunit.

Its function is as follows. One of two assembly initiator proteins, it binds directly to the 5'-end of the 23S rRNA, where it nucleates assembly of the 50S subunit. Functionally, one of the proteins that surrounds the polypeptide exit tunnel on the outside of the subunit. The sequence is that of Large ribosomal subunit protein uL24 from Mycoplasma capricolum subsp. capricolum (strain California kid / ATCC 27343 / NCTC 10154).